We begin with the raw amino-acid sequence, 256 residues long: Small ribosomal subunit protein uS2 (256 aa).

Belongs to the universal ribosomal protein uS2 family.

The polypeptide is Small ribosomal subunit protein uS2 (Ruegeria sp. (strain TM1040) (Silicibacter sp.)).